A 407-amino-acid chain; its full sequence is Argininosuccinate synthase (407 aa).

ATP contacts are provided by residues 10-18 and Ala-37; that span reads AYSGGLDTS. Residues Tyr-90 and Ser-95 each contribute to the L-citrulline site. An ATP-binding site is contributed by Gly-120. Thr-122, Asn-126, and Asp-127 together coordinate L-aspartate. Asn-126 is a binding site for L-citrulline. L-citrulline contacts are provided by Arg-130, Ser-181, Ser-190, Glu-266, and Tyr-278.

Belongs to the argininosuccinate synthase family. Type 1 subfamily. In terms of assembly, homotetramer.

Its subcellular location is the cytoplasm. It carries out the reaction L-citrulline + L-aspartate + ATP = 2-(N(omega)-L-arginino)succinate + AMP + diphosphate + H(+). It participates in amino-acid biosynthesis; L-arginine biosynthesis; L-arginine from L-ornithine and carbamoyl phosphate: step 2/3. The sequence is that of Argininosuccinate synthase from Ruegeria sp. (strain TM1040) (Silicibacter sp.).